The primary structure comprises 139 residues: uncharacterized protein (139 aa).

To E.coli YecT.

This is an uncharacterized protein from Rhizobium meliloti (strain 1021) (Ensifer meliloti).